The primary structure comprises 122 residues: NADH-quinone oxidoreductase subunit A (122 aa).

3 helical membrane passes run 10–30 (MIVL…LTLG), 66–86 (IFAL…PWAV), and 91–111 (LGLF…VGLA).

It belongs to the complex I subunit 3 family. NDH-1 is composed of 14 different subunits. Subunits NuoA, H, J, K, L, M, N constitute the membrane sector of the complex.

The protein resides in the cell membrane. It carries out the reaction a quinone + NADH + 5 H(+)(in) = a quinol + NAD(+) + 4 H(+)(out). In terms of biological role, NDH-1 shuttles electrons from NADH, via FMN and iron-sulfur (Fe-S) centers, to quinones in the respiratory chain. The immediate electron acceptor for the enzyme in this species is believed to be a menaquinone. Couples the redox reaction to proton translocation (for every two electrons transferred, four hydrogen ions are translocated across the cytoplasmic membrane), and thus conserves the redox energy in a proton gradient. The sequence is that of NADH-quinone oxidoreductase subunit A from Bacillus mycoides (strain KBAB4) (Bacillus weihenstephanensis).